The sequence spans 558 residues: MSILNCRPSFDGVDTDDACCGAMASACCVNTKEDGESPSAGSPSGTPQSLVLEDVQGYDVEFDPPLESKYECPICLMALREAVQTPCGHRFCKACILKSIRDAGHKCPVDNESLMENQLFPDNFAKREILSLRVKCPSQGCTETMELRHLERHLVRCDFAGVECSQCQSSFPKYSLQKHKFEECPRRQIFCENCAVAMALEDKLNHDQTCPLAYVTCEYCQTNLIREQMPAHYSMDCTMAPIPCMYYEFGCTEKMQRNDLARHLQEFTQAHMRMMAQTLRSFSSSVTPTSHMPDISFCDPSQFEPAPPSVATVHSTHTPSQNDCTQETRNLRETIEQLEGRLVRQDHQIRELIAKMETQCTYVNELKHTIRSLDNRLGEMESQQCSGIFIWRINNFNSLLKNQEEERPVVIHSQGFYTGKPGYKLCLRLHLQLPSAQRCANYISLFVHTMQGEYDSLLPWPLQGTIRLSILDQSEGVAMQDQEEVMDTKPELLAFQRPTVARNPKGFGYVTFMHLQALKQRQYVKNDTLLVRCSVTTHLDLISPRREGFQPRSGDGAL.

The RING-type; degenerate zinc finger occupies 72-111; the sequence is CPICLMALREAVQTPCGHRFCKACILKSIRDAGHKCPVDN. 2 TRAF-type zinc fingers span residues 148 to 204 and 205 to 261; these read RHLE…EDKL and NHDQ…NDLA. The stretch at 321-384 forms a coiled coil; it reads QNDCTQETRN…NRLGEMESQQ (64 aa). The 150-residue stretch at 386-535 folds into the MATH domain; that stretch reads SGIFIWRINN…NDTLLVRCSV (150 aa).

It belongs to the TNF receptor-associated factor family. A subfamily. Homotrimer. Homooligomer.

The protein localises to the cytoplasm. Its subcellular location is the cell cortex. The protein resides in the nucleus. It is found in the lipid droplet. The enzyme catalyses S-ubiquitinyl-[E2 ubiquitin-conjugating enzyme]-L-cysteine + [acceptor protein]-L-lysine = [E2 ubiquitin-conjugating enzyme]-L-cysteine + N(6)-ubiquitinyl-[acceptor protein]-L-lysine.. Its pathway is protein modification; protein ubiquitination. Its function is as follows. E3 ubiquitin ligase that, together with UBE2N and UBE2V1, mediates the synthesis of 'Lys-63'-linked-polyubiquitin chains conjugated to proteins, such as IKBKG, IRAK1, AKT1 and AKT2. Also mediates ubiquitination of free/unanchored polyubiquitin chain that leads to MAP3K7 activation. This is TNF receptor-associated factor 6 (traf6) from Xenopus tropicalis (Western clawed frog).